The chain runs to 401 residues: 3-sulfinopropanoyl-CoA desulfinase (401 aa).

FAD contacts are provided by residues 121 to 124, Ser-130, and 153 to 156; these read ICIS and YWIT. Position 243–244 (243–244) interacts with substrate; it reads YN. Residues Arg-272, Gln-339, Ser-343, 366-370, and Gln-387 contribute to the FAD site; that span reads GGTAQ.

Belongs to the acyl-CoA dehydrogenase family. Homotetramer. Requires FAD as cofactor.

The enzyme catalyses 3-sulfinopropanoyl-CoA + H2O = propanoyl-CoA + sulfite + H(+). In terms of biological role, catalyzes the conversion 3-sulfinopropanoyl-CoA (3SP-CoA) to propanoyl-CoA by abstraction of sulfite. Does not show dehydrogenase activity. Involved in the degradation of 3,3'-dithiodipropionate (DTDP), a sulfur-containing precursor substrate for biosynthesis of polythioesters (PTEs). This chain is 3-sulfinopropanoyl-CoA desulfinase, found in Advenella mimigardefordensis (strain DSM 17166 / LMG 22922 / DPN7).